The primary structure comprises 916 residues: Translation initiation factor IF-2 (916 aa).

Residues 151-191 (NLDEQQRLAESDRARDEAIQRKRDEEQAAKDRVEAERKAAE) show a composition bias toward basic and acidic residues. Disordered regions lie at residues 151–262 (NLDE…SHVM) and 280–328 (HLSA…ERPT). Low complexity-rich tracts occupy residues 192–243 (EAAA…ATPA) and 293–305 (RGKPTGRPGSSSS). Residues 415–584 (SRPPVVTIMG…SLQAEVLELK (170 aa)) form the tr-type G domain. Residues 424 to 431 (GHVDHGKT) are G1. 424–431 (GHVDHGKT) lines the GTP pocket. The segment at 449-453 (GITQH) is G2. The interval 470–473 (DTPG) is G3. GTP contacts are provided by residues 470-474 (DTPGH) and 524-527 (NKID). Residues 524–527 (NKID) form a G4 region. A G5 region spans residues 560 to 562 (SAK).

It belongs to the TRAFAC class translation factor GTPase superfamily. Classic translation factor GTPase family. IF-2 subfamily.

It is found in the cytoplasm. Functionally, one of the essential components for the initiation of protein synthesis. Protects formylmethionyl-tRNA from spontaneous hydrolysis and promotes its binding to the 30S ribosomal subunits. Also involved in the hydrolysis of GTP during the formation of the 70S ribosomal complex. This chain is Translation initiation factor IF-2, found in Xanthomonas campestris pv. campestris (strain B100).